The following is a 249-amino-acid chain: Derlin-2.1 (249 aa).

The Cytoplasmic portion of the chain corresponds to 1–21; sequence MAQAVEEWYRQMPIITRSYLT. A helical membrane pass occupies residues 22–42; that stretch reads AAVVTTVGCTLEIISPYHLYL. Over 43–96 the chain is Lumenal; that stretch reads NPKLVVQHYEIWRLVTNFLYFRKMDLDFLFHMFFLARYCKLLEENSFRGRTADF. Residues 97–117 traverse the membrane as a helical segment; that stretch reads FYMLLFGATVLTSIVLIGGMI. Topologically, residues 118-122 are cytoplasmic; the sequence is PYISE. Residues 123–143 traverse the membrane as a helical segment; it reads TFARILFLSNSLTFMMVYVWS. Topologically, residues 144–152 are lumenal; the sequence is KHNPFIHMS. The chain crosses the membrane as a helical span at residues 153–173; the sequence is FLGLFTFTAAYLPWVLLGFSI. At 174–249 the chain is on the cytoplasmic side; it reads LVGSSTWVDL…GAMGLDPQAQ (76 aa).

This sequence belongs to the derlin family. As to expression, expressed in roots, stalks, leaves, embryo and endosperm.

The protein resides in the endoplasmic reticulum membrane. Functionally, may be involved in the degradation process of specific misfolded endoplasmic reticulum (ER) luminal proteins. The sequence is that of Derlin-2.1 (DER2.1) from Zea mays (Maize).